The primary structure comprises 234 residues: 1-(5-phosphoribosyl)-5-[(5-phosphoribosylamino)methylideneamino] imidazole-4-carboxamide isomerase (234 aa).

The active-site Proton acceptor is the aspartate 9. The active-site Proton donor is the aspartate 131.

Belongs to the HisA/HisF family.

The protein resides in the cytoplasm. The catalysed reaction is 1-(5-phospho-beta-D-ribosyl)-5-[(5-phospho-beta-D-ribosylamino)methylideneamino]imidazole-4-carboxamide = 5-[(5-phospho-1-deoxy-D-ribulos-1-ylimino)methylamino]-1-(5-phospho-beta-D-ribosyl)imidazole-4-carboxamide. It functions in the pathway amino-acid biosynthesis; L-histidine biosynthesis; L-histidine from 5-phospho-alpha-D-ribose 1-diphosphate: step 4/9. The chain is 1-(5-phosphoribosyl)-5-[(5-phosphoribosylamino)methylideneamino] imidazole-4-carboxamide isomerase from Staphylococcus carnosus (strain TM300).